We begin with the raw amino-acid sequence, 1105 residues long: Lysylphosphatidylglycerol biosynthesis bifunctional protein LysX (1105 aa).

The tract at residues 1-603 (MTVTKPRSVQ…LLHHDGSAPD (603 aa)) is phosphatidylglycerol lysyltransferase. 7 helical membrane-spanning segments follow: residues 20 to 40 (VPAA…LASI), 62 to 82 (FPDT…ALAA), 86 to 106 (IAWL…AADI), 117 to 137 (FGEN…VLGY), 154 to 174 (AVLV…VDLF), 186 to 203 (YVAN…DLFT), and 208 to 228 (VFLN…ATIV). Residues 604-1105 (VSGLRQSAIA…TLPFPLAKPH (502 aa)) are lysine--tRNA ligase. Positions 1017 and 1024 each coordinate Mg(2+).

It in the N-terminal section; belongs to the LPG synthetase family. This sequence in the C-terminal section; belongs to the class-II aminoacyl-tRNA synthetase family. Mg(2+) serves as cofactor.

The protein localises to the cell membrane. It catalyses the reaction tRNA(Lys) + L-lysine + ATP = L-lysyl-tRNA(Lys) + AMP + diphosphate. The enzyme catalyses L-lysyl-tRNA(Lys) + a 1,2-diacyl-sn-glycero-3-phospho-(1'-sn-glycerol) = a 1,2-diacyl-sn-glycero-3-phospho-1'-(3'-O-L-lysyl)-sn-glycerol + tRNA(Lys). Its function is as follows. Catalyzes the production of L-lysyl-tRNA(Lys)transfer and the transfer of a lysyl group from L-lysyl-tRNA(Lys) to membrane-bound phosphatidylglycerol (PG), which produces lysylphosphatidylglycerol (LPG), one of the components of the bacterial membrane with a positive net charge. LPG synthesis contributes to the resistance to cationic antimicrobial peptides (CAMPs) and likely protects M.tuberculosis against the CAMPs produced by competiting microorganisms (bacteriocins). In fact, the modification of anionic phosphatidylglycerol with positively charged L-lysine results in repulsion of the peptides. The chain is Lysylphosphatidylglycerol biosynthesis bifunctional protein LysX (lysX) from Mycobacterium ulcerans (strain Agy99).